We begin with the raw amino-acid sequence, 126 residues long: Large ribosomal subunit protein bL19 (126 aa).

The protein belongs to the bacterial ribosomal protein bL19 family.

Functionally, this protein is located at the 30S-50S ribosomal subunit interface and may play a role in the structure and function of the aminoacyl-tRNA binding site. This chain is Large ribosomal subunit protein bL19, found in Bordetella bronchiseptica (strain ATCC BAA-588 / NCTC 13252 / RB50) (Alcaligenes bronchisepticus).